A 544-amino-acid polypeptide reads, in one-letter code: Chaperonin GroEL (544 aa).

ATP is bound by residues 30 to 33 (TLGP), Lys-51, 87 to 91 (DGTTT), Gly-415, and Asp-495.

The protein belongs to the chaperonin (HSP60) family. Forms a cylinder of 14 subunits composed of two heptameric rings stacked back-to-back. Interacts with the co-chaperonin GroES.

It localises to the cytoplasm. It catalyses the reaction ATP + H2O + a folded polypeptide = ADP + phosphate + an unfolded polypeptide.. Together with its co-chaperonin GroES, plays an essential role in assisting protein folding. The GroEL-GroES system forms a nano-cage that allows encapsulation of the non-native substrate proteins and provides a physical environment optimized to promote and accelerate protein folding. This is Chaperonin GroEL from Neisseria gonorrhoeae (strain ATCC 700825 / FA 1090).